Reading from the N-terminus, the 383-residue chain is Galactokinase (383 aa).

34–37 (EHTD) contributes to the substrate binding site. 124–130 (GAGLSSS) serves as a coordination point for ATP. Mg(2+) contacts are provided by Ser130 and Glu162. Asp174 acts as the Proton acceptor in catalysis. Tyr223 is a binding site for substrate.

It belongs to the GHMP kinase family. GalK subfamily.

The protein resides in the cytoplasm. It carries out the reaction alpha-D-galactose + ATP = alpha-D-galactose 1-phosphate + ADP + H(+). It functions in the pathway carbohydrate metabolism; galactose metabolism. In terms of biological role, catalyzes the transfer of the gamma-phosphate of ATP to D-galactose to form alpha-D-galactose-1-phosphate (Gal-1-P). The polypeptide is Galactokinase (Serratia proteamaculans (strain 568)).